A 759-amino-acid chain; its full sequence is Xaa-Pro dipeptidyl-peptidase (759 aa).

Residues Ser347, Asp467, and His497 each act as charge relay system in the active site.

It belongs to the peptidase S15 family. Homodimer.

It localises to the cytoplasm. It carries out the reaction Hydrolyzes Xaa-Pro-|- bonds to release unblocked, N-terminal dipeptides from substrates including Ala-Pro-|-p-nitroanilide and (sequentially) Tyr-Pro-|-Phe-Pro-|-Gly-Pro-|-Ile.. In terms of biological role, removes N-terminal dipeptides sequentially from polypeptides having unsubstituted N-termini provided that the penultimate residue is proline. The sequence is that of Xaa-Pro dipeptidyl-peptidase from Streptococcus gordonii (strain Challis / ATCC 35105 / BCRC 15272 / CH1 / DL1 / V288).